Consider the following 209-residue polypeptide: Uracil phosphoribosyltransferase (209 aa).

5-phospho-alpha-D-ribose 1-diphosphate contacts are provided by residues Arg-79, Arg-104, and 131–139; that span reads DPMLATGGS. Residues Ile-194 and 199–201 each bind uracil; that span reads GDA. 5-phospho-alpha-D-ribose 1-diphosphate is bound at residue Asp-200.

It belongs to the UPRTase family. Mg(2+) serves as cofactor.

The catalysed reaction is UMP + diphosphate = 5-phospho-alpha-D-ribose 1-diphosphate + uracil. It participates in pyrimidine metabolism; UMP biosynthesis via salvage pathway; UMP from uracil: step 1/1. Its activity is regulated as follows. Allosterically activated by GTP. Functionally, catalyzes the conversion of uracil and 5-phospho-alpha-D-ribose 1-diphosphate (PRPP) to UMP and diphosphate. The chain is Uracil phosphoribosyltransferase from Listeria innocua serovar 6a (strain ATCC BAA-680 / CLIP 11262).